The following is a 71-amino-acid chain: Ranatuerin-2PLa (71 aa).

The first 22 residues, 1–22 (MFTTKKSMLLFFFLGTISLSLC), serve as a signal peptide directing secretion. A propeptide spanning residues 23 to 41 (EQERGADEDDGVEMTEEEV) is cleaved from the precursor. Cysteine 66 and cysteine 71 are disulfide-bonded.

As to expression, expressed by the skin glands.

It is found in the secreted. In terms of biological role, may have antimicrobial activity against the Gram-negative bacterium E.coli. This chain is Ranatuerin-2PLa, found in Lithobates palustris (Pickerel frog).